The primary structure comprises 398 residues: Heat-inducible transcription repressor HrcA (398 aa).

This sequence belongs to the HrcA family.

In terms of biological role, negative regulator of class I heat shock genes (grpE-dnaK-dnaJ and groELS operons). Prevents heat-shock induction of these operons. The sequence is that of Heat-inducible transcription repressor HrcA from Chlamydia pneumoniae (Chlamydophila pneumoniae).